The sequence spans 282 residues: Putative 4-diphosphocytidyl-2-C-methyl-D-erythritol kinase (282 aa).

The active site involves lysine 9. ATP is bound at residue 93–103; the sequence is PVSAGLAGGSA. Aspartate 135 is an active-site residue.

It belongs to the GHMP kinase family. IspE subfamily.

The enzyme catalyses 4-CDP-2-C-methyl-D-erythritol + ATP = 4-CDP-2-C-methyl-D-erythritol 2-phosphate + ADP + H(+). Its function is as follows. Catalyzes the phosphorylation of the position 2 hydroxy group of 4-diphosphocytidyl-2C-methyl-D-erythritol. This chain is Putative 4-diphosphocytidyl-2-C-methyl-D-erythritol kinase, found in Staphylococcus aureus (strain MSSA476).